The primary structure comprises 748 residues: Putative pre-mRNA-splicing factor ATP-dependent RNA helicase DHX32 (748 aa).

In terms of domain architecture, Helicase ATP-binding spans 74–240 (LEHLAHNQIV…YGNAPLVEAE (167 aa)). 87–94 (AGPKSGKS) contributes to the ATP binding site. Residues 263–439 (RLLFEIHHTK…SMVLFLKRMD (177 aa)) enclose the Helicase C-terminal domain. Residues 706–748 (SETKDLLQQDQTPDTPPTEEPREEEPLHEANDEGTAEQRCIIQ) are disordered.

It belongs to the DEAD box helicase family. DEAH subfamily.

The protein localises to the nucleus. The protein resides in the mitochondrion. It carries out the reaction ATP + H2O = ADP + phosphate + H(+). The protein is Putative pre-mRNA-splicing factor ATP-dependent RNA helicase DHX32 (dhx32) of Xenopus laevis (African clawed frog).